A 378-amino-acid chain; its full sequence is Dual-specificity RNA methyltransferase RlmN (378 aa).

Residue Glu-95 is the Proton acceptor of the active site. One can recognise a Radical SAM core domain in the interval 101 to 345; the sequence is EETRGTLCVS…TTIRKTRGDD (245 aa). Cys-108 and Cys-350 are disulfide-bonded. Positions 115, 119, and 122 each coordinate [4Fe-4S] cluster. S-adenosyl-L-methionine-binding positions include 176–177, Ser-208, 230–232, and Asn-307; these read GE and SLH. The S-methylcysteine intermediate role is filled by Cys-350.

Belongs to the radical SAM superfamily. RlmN family. The cofactor is [4Fe-4S] cluster.

Its subcellular location is the cytoplasm. It carries out the reaction adenosine(2503) in 23S rRNA + 2 reduced [2Fe-2S]-[ferredoxin] + 2 S-adenosyl-L-methionine = 2-methyladenosine(2503) in 23S rRNA + 5'-deoxyadenosine + L-methionine + 2 oxidized [2Fe-2S]-[ferredoxin] + S-adenosyl-L-homocysteine. The enzyme catalyses adenosine(37) in tRNA + 2 reduced [2Fe-2S]-[ferredoxin] + 2 S-adenosyl-L-methionine = 2-methyladenosine(37) in tRNA + 5'-deoxyadenosine + L-methionine + 2 oxidized [2Fe-2S]-[ferredoxin] + S-adenosyl-L-homocysteine. In terms of biological role, specifically methylates position 2 of adenine 2503 in 23S rRNA and position 2 of adenine 37 in tRNAs. m2A2503 modification seems to play a crucial role in the proofreading step occurring at the peptidyl transferase center and thus would serve to optimize ribosomal fidelity. This chain is Dual-specificity RNA methyltransferase RlmN, found in Burkholderia pseudomallei (strain K96243).